Consider the following 211-residue polypeptide: dITP/XTP pyrophosphatase (211 aa).

Residue 13 to 18 participates in substrate binding; it reads THNPGK. Mg(2+)-binding residues include aspartate 45 and aspartate 74. Residue aspartate 74 is the Proton acceptor of the active site. Substrate contacts are provided by residues serine 75, 160–163, lysine 183, and 195–196; these read FGYD and HR.

Belongs to the HAM1 NTPase family. In terms of assembly, homodimer. Mg(2+) serves as cofactor.

The enzyme catalyses XTP + H2O = XMP + diphosphate + H(+). It catalyses the reaction dITP + H2O = dIMP + diphosphate + H(+). The catalysed reaction is ITP + H2O = IMP + diphosphate + H(+). Pyrophosphatase that catalyzes the hydrolysis of nucleoside triphosphates to their monophosphate derivatives, with a high preference for the non-canonical purine nucleotides XTP (xanthosine triphosphate), dITP (deoxyinosine triphosphate) and ITP. Seems to function as a house-cleaning enzyme that removes non-canonical purine nucleotides from the nucleotide pool, thus preventing their incorporation into DNA/RNA and avoiding chromosomal lesions. The polypeptide is dITP/XTP pyrophosphatase (Bradyrhizobium diazoefficiens (strain JCM 10833 / BCRC 13528 / IAM 13628 / NBRC 14792 / USDA 110)).